The following is a 122-amino-acid chain: Large ribosomal subunit protein uL14 (122 aa).

The protein belongs to the universal ribosomal protein uL14 family. As to quaternary structure, part of the 50S ribosomal subunit. Forms a cluster with proteins L3 and L19. In the 70S ribosome, L14 and L19 interact and together make contacts with the 16S rRNA in bridges B5 and B8.

Binds to 23S rRNA. Forms part of two intersubunit bridges in the 70S ribosome. This is Large ribosomal subunit protein uL14 from Lactobacillus acidophilus (strain ATCC 700396 / NCK56 / N2 / NCFM).